Here is a 283-residue protein sequence, read N- to C-terminus: Bifunctional protein FolD (283 aa).

Residues 165–167, S190, and V231 each bind NADP(+); that span reads GRS.

Belongs to the tetrahydrofolate dehydrogenase/cyclohydrolase family. As to quaternary structure, homodimer.

It carries out the reaction (6R)-5,10-methylene-5,6,7,8-tetrahydrofolate + NADP(+) = (6R)-5,10-methenyltetrahydrofolate + NADPH. The catalysed reaction is (6R)-5,10-methenyltetrahydrofolate + H2O = (6R)-10-formyltetrahydrofolate + H(+). Its pathway is one-carbon metabolism; tetrahydrofolate interconversion. Its function is as follows. Catalyzes the oxidation of 5,10-methylenetetrahydrofolate to 5,10-methenyltetrahydrofolate and then the hydrolysis of 5,10-methenyltetrahydrofolate to 10-formyltetrahydrofolate. This is Bifunctional protein FolD from Bacillus pumilus (strain SAFR-032).